The primary structure comprises 261 residues: Probable RNA-binding protein ARP1 (261 aa).

The RRM domain maps to 17-94 (TKVFVGGLAW…RRANCNLASL (78 aa)). Residues 96 to 122 (GRLRKSPTMTSPQQGPKNGNRATPPHV) form a disordered region. Positions 102–116 (PTMTSPQQGPKNGNR) are enriched in polar residues.

As to expression, expressed in vasculature of leaves, roots and siliques.

The protein resides in the nucleus. In terms of biological role, probable RNA-binding protein involved in the regulation of abscisic acid (ABA) response during seed germination. May regulate transcript levels of several germination-responsive genes under ABA. The chain is Probable RNA-binding protein ARP1 from Arabidopsis thaliana (Mouse-ear cress).